Consider the following 88-residue polypeptide: Histone H2A-beta, sperm (88 aa).

Belongs to the histone H2A family. The nucleosome is a histone octamer containing two molecules each of H2A, H2B, H3 and H4 assembled in one H3-H4 heterotetramer and two H2A-H2B heterodimers. The octamer wraps approximately 147 bp of DNA. Post-translationally, monoubiquitination in C-terminus gives a specific tag for epigenetic transcriptional repression.

It is found in the nucleus. It localises to the chromosome. Core component of nucleosome. Nucleosomes wrap and compact DNA into chromatin, limiting DNA accessibility to the cellular machineries which require DNA as a template. Histones thereby play a central role in transcription regulation, DNA repair, DNA replication and chromosomal stability. DNA accessibility is regulated via a complex set of post-translational modifications of histones, also called histone code, and nucleosome remodeling. This is Histone H2A-beta, sperm from Strongylocentrotus purpuratus (Purple sea urchin).